A 404-amino-acid polypeptide reads, in one-letter code: Cysteine desulfurase IscS (404 aa).

Residues 75–76 (AT), Asn-155, Gln-183, and 203–205 (SAH) each bind pyridoxal 5'-phosphate. Lys-206 is subject to N6-(pyridoxal phosphate)lysine. Thr-243 contributes to the pyridoxal 5'-phosphate binding site. Cys-328 acts as the Cysteine persulfide intermediate in catalysis. Cys-328 serves as a coordination point for [2Fe-2S] cluster.

Belongs to the class-V pyridoxal-phosphate-dependent aminotransferase family. NifS/IscS subfamily. In terms of assembly, homodimer. Forms a heterotetramer with IscU, interacts with other sulfur acceptors. Requires pyridoxal 5'-phosphate as cofactor.

It is found in the cytoplasm. It catalyses the reaction (sulfur carrier)-H + L-cysteine = (sulfur carrier)-SH + L-alanine. The protein operates within cofactor biosynthesis; iron-sulfur cluster biosynthesis. Functionally, master enzyme that delivers sulfur to a number of partners involved in Fe-S cluster assembly, tRNA modification or cofactor biosynthesis. Catalyzes the removal of elemental sulfur atoms from cysteine to produce alanine. Functions as a sulfur delivery protein for Fe-S cluster synthesis onto IscU, an Fe-S scaffold assembly protein, as well as other S acceptor proteins. This chain is Cysteine desulfurase IscS, found in Pseudomonas syringae pv. tomato (strain ATCC BAA-871 / DC3000).